Here is a 546-residue protein sequence, read N- to C-terminus: Probable sucrose-6-phosphate hydrolase (546 aa).

Substrate-binding positions include 105–108 (LLND), Gln124, 167–168 (FS), 228–229 (RD), and Glu283. Asp108 is an active-site residue.

It belongs to the glycosyl hydrolase 32 family.

The protein localises to the cytoplasm. It catalyses the reaction Hydrolysis of terminal non-reducing beta-D-fructofuranoside residues in beta-D-fructofuranosides.. It participates in glycan biosynthesis; sucrose metabolism. In terms of biological role, enables the bacterium to metabolize sucrose as a sole carbon source. The chain is Probable sucrose-6-phosphate hydrolase from Vibrio cholerae.